Here is a 268-residue protein sequence, read N- to C-terminus: Enoyl-[acyl-carrier-protein] reductase [NADH] 2 (268 aa).

NAD(+) contacts are provided by residues Gly-14, 20 to 21 (SI), Gln-41, 65 to 66 (DV), and Ile-93. Residues Tyr-146 and Tyr-156 each act as proton acceptor in the active site. Residues Lys-163 and 192–196 (IRTLA) each bind NAD(+).

Belongs to the short-chain dehydrogenases/reductases (SDR) family. FabI subfamily.

The protein localises to the cell inner membrane. It catalyses the reaction a 2,3-saturated acyl-[ACP] + NAD(+) = a (2E)-enoyl-[ACP] + NADH + H(+). Its pathway is lipid metabolism; fatty acid biosynthesis. This Rhizobium meliloti (strain 1021) (Ensifer meliloti) protein is Enoyl-[acyl-carrier-protein] reductase [NADH] 2 (fabI2).